A 240-amino-acid chain; its full sequence is Methylthioribulose-1-phosphate dehydratase (240 aa).

Cysteine 103 contacts substrate. Residues histidine 121 and histidine 123 each coordinate Zn(2+). Glutamate 144 (proton donor/acceptor) is an active-site residue. Histidine 200 lines the Zn(2+) pocket.

It belongs to the aldolase class II family. MtnB subfamily. It depends on Zn(2+) as a cofactor.

The protein resides in the cytoplasm. The enzyme catalyses 5-(methylsulfanyl)-D-ribulose 1-phosphate = 5-methylsulfanyl-2,3-dioxopentyl phosphate + H2O. It functions in the pathway amino-acid biosynthesis; L-methionine biosynthesis via salvage pathway; L-methionine from S-methyl-5-thio-alpha-D-ribose 1-phosphate: step 2/6. Its function is as follows. Catalyzes the dehydration of methylthioribulose-1-phosphate (MTRu-1-P) into 2,3-diketo-5-methylthiopentyl-1-phosphate (DK-MTP-1-P). This chain is Methylthioribulose-1-phosphate dehydratase, found in Komagataella phaffii (strain GS115 / ATCC 20864) (Yeast).